The primary structure comprises 531 residues: MNSTNFFSHDLYLYHQVIRCIVKYRNLLLAYSGGMDSTVLLDILTKLKKYFDFQVKGTSKILPFFLRAVYVHHGLNNKADYWADHCLQQCKMRNVPFHIIYINHSDLSKIKCNIEAMARDFRYKALFNALKPEEVLLTAHHMNDQVETVLLALKRGSGPAGLSGMTQDILYQHNEYQHRLLRPLLKCSHIQLQEYAYRKKLTWVEDDTNTDVRFDRNFLRVQVIPLFQKRWPAFNKVVSRTAQLCREQENLLHELLSESLDQLIDIDNALFFYPLIKYSDVRRRVVLRYWLSRFFINMPSYKLLDCIWKEVALSKVDSQSILHVGKKYICRRFRKKLYILPDNMKSSLDIFLLPWKNFNNTILLPNELGLLTSQSLTVNLFLFYKNLIPYTHLNMLSDIFLPRYHNNVGDEKILSVCFIRPPMNNEKVSIQFGYIQGLLHLANRDRGRKLKKIWQEYNVPPWLRNHIPLLFYNDTLISAIGIFITRNGSCIVNMNNLICNNKKSIILQKITWVQSDFYYRIFKNFVYNTLR.

32-37 (SGGMDS) is an ATP binding site.

Belongs to the tRNA(Ile)-lysidine synthase family.

It localises to the cytoplasm. The enzyme catalyses cytidine(34) in tRNA(Ile2) + L-lysine + ATP = lysidine(34) in tRNA(Ile2) + AMP + diphosphate + H(+). In terms of biological role, ligates lysine onto the cytidine present at position 34 of the AUA codon-specific tRNA(Ile) that contains the anticodon CAU, in an ATP-dependent manner. Cytidine is converted to lysidine, thus changing the amino acid specificity of the tRNA from methionine to isoleucine. In Blochmanniella floridana, this protein is tRNA(Ile)-lysidine synthase.